The chain runs to 449 residues: MLSTMRPRLSLLLLRLLLLTKAAHTVGVPPRLCDVRRVLLEERAHCLQQLSKEKKGALGPETASGCEGLWDNMSCWPSSAPARTVEVQCPKFLLMLSNKNGSLFRNCTQDGWSETFPRPDLACGVNINNSFNERRHAYLLKLKVMYTVGYSSSLAMLLVALSILCSFRRLHCTRNYIHMHLFVSFILRALSNFIKDAVLFSSDDVTYCDAHKVGCKLVMIFFQYCIMANYAWLLVEGLYLHTLLAISFFSERKYLQAFVLLGWGSPAIFVALWAITRHFLENTGCWDINANASVWWVIRGPVILSILINFIFFINILRILMRKLRTQETRGSETNHYKRLAKSTLLLIPLFGIHYIVFAFSPEDAMEVQLFFELALGSFQGLVVAVLYCFLNGEVQLEVQKKWRQWHLQEFPLRPVAFNNSFSNATNGPTHSTKASTEQSRSIPRASII.

A signal peptide spans 1–25 (MLSTMRPRLSLLLLRLLLLTKAAHT). The Extracellular segment spans residues 26–141 (VGVPPRLCDV…NERRHAYLLK (116 aa)). 3 cysteine pairs are disulfide-bonded: cysteine 46-cysteine 75, cysteine 66-cysteine 107, and cysteine 89-cysteine 123. 4 N-linked (GlcNAc...) asparagine glycosylation sites follow: asparagine 72, asparagine 100, asparagine 106, and asparagine 128. The helical transmembrane segment at 142–167 (LKVMYTVGYSSSLAMLLVALSILCSF) threads the bilayer. Topologically, residues 168–174 (RRLHCTR) are cytoplasmic. Residues 175–195 (NYIHMHLFVSFILRALSNFIK) form a helical membrane-spanning segment. Over 196 to 216 (DAVLFSSDDVTYCDAHKVGCK) the chain is Extracellular. A disulfide bond links cysteine 215 and cysteine 285. The helical transmembrane segment at 217 to 239 (LVMIFFQYCIMANYAWLLVEGLY) threads the bilayer. Residues 240-254 (LHTLLAISFFSERKY) lie on the Cytoplasmic side of the membrane. A helical transmembrane segment spans residues 255-276 (LQAFVLLGWGSPAIFVALWAIT). Residues 277-291 (RHFLENTGCWDINAN) lie on the Extracellular side of the membrane. Residue asparagine 291 is glycosylated (N-linked (GlcNAc...) asparagine). A helical transmembrane segment spans residues 292-315 (ASVWWVIRGPVILSILINFIFFIN). Over 316 to 340 (ILRILMRKLRTQETRGSETNHYKRL) the chain is Cytoplasmic. Residues 341–356 (AKSTLLLIPLFGIHYI) form a helical membrane-spanning segment. At 357-367 (VFAFSPEDAME) the chain is on the extracellular side. A helical transmembrane segment spans residues 368–391 (VQLFFELALGSFQGLVVAVLYCFL). Over 392–449 (NGEVQLEVQKKWRQWHLQEFPLRPVAFNNSFSNATNGPTHSTKASTEQSRSIPRASII) the chain is Cytoplasmic. Residues 425–442 (ATNGPTHSTKASTEQSRS) show a composition bias toward polar residues. Residues 425-449 (ATNGPTHSTKASTEQSRSIPRASII) are disordered.

The protein belongs to the G-protein coupled receptor 2 family. Post-translationally, phosphorylated on Ser and Thr residues at the cytoplasmic C-terminus by G protein-coupled receptor kinases (GRKs). N-glycosylated. In terms of tissue distribution, in the brain, expressed in the central amygdala, hippocampus, area postrema, nucleus of the tractus solitary and cerebellum.

Its subcellular location is the cell membrane. The protein resides in the basolateral cell membrane. Functionally, g protein-coupled receptor activated by secretin (SCT), which is involved in different processes such as regulation of the pH of the duodenal content, food intake and water homeostasis. Ligand binding causes a conformation change that triggers signaling via guanine nucleotide-binding proteins (G proteins) and activates cAMP-dependent pathway. Upon binding to secretin, regulates the pH of the duodenum by (1) inhibiting the secretion of gastric acid from the parietal cells of the stomach and (2) stimulating the production of bicarbonate (NaHCO(3)) from the ductal cells of the pancreas. In addition to regulating the pH of the duodenal content, plays a central role in diet induced thermogenesis: acts as a non-sympathetic brown fat (BAT) activator mediating prandial thermogenesis, which consequentially induces satiation. Mechanistically, secretin released by the gut after a meal binds to secretin receptor (SCTR) in brown adipocytes, activating brown fat thermogenesis by stimulating lipolysis, which is sensed in the brain and promotes satiation. Also able to stimulate lipolysis in white adipocytes. Also plays an important role in cellular osmoregulation by regulating renal water reabsorption. Also plays a role in the central nervous system: required for synaptic plasticity. The chain is Secretin receptor from Rattus norvegicus (Rat).